We begin with the raw amino-acid sequence, 389 residues long: SH3 and F-BAR domain-containing protein DDB_G0274695 (389 aa).

The F-BAR domain maps to 3–258 (EQFKDNFWGP…VITQIDKLED (256 aa)). A coiled-coil region spans residues 119 to 192 (KLNKERKDME…QDYRDSVNKL (74 aa)). The segment covering 300 to 328 (LTSSVSSNSLTSSYNSATTTPTPAPRSTP) has biased composition (low complexity). A disordered region spans residues 300-329 (LTSSVSSNSLTSSYNSATTTPTPAPRSTPI). The SH3 domain occupies 332-389 (SKKKQAKALYDYVGSDATELDFFAGDIITILDEDESGWFRGELGDRIGLYPSNYCEPI).

The protein is SH3 and F-BAR domain-containing protein DDB_G0274695 of Dictyostelium discoideum (Social amoeba).